We begin with the raw amino-acid sequence, 3432 residues long: Hybrid signal transduction histidine kinase G (3432 aa).

3 stretches are compositionally biased toward low complexity: residues 44–68 (HFSN…TTTN), 76–90 (SQLQ…QQNN), and 126–145 (QPQQ…SQKQ). Disordered regions lie at residues 44–109 (HFSN…TNSS) and 124–240 (DDQP…HNIN). The span at 146-157 (TSQLNISGNNSG) shows a compositional bias: polar residues. Low complexity-rich tracts occupy residues 165-177 (TISN…NFIH) and 187-238 (KTPI…NNHN). The 530-residue stretch at 263 to 792 (LSFKHGYNSG…YGLKKDLEMF (530 aa)) folds into the Protein kinase domain. ATP-binding positions include 269 to 277 (YNSGLGGNF) and lysine 305. The span at 399–419 (NNNNNNNNSYNNNYNNNNNNN) shows a compositional bias: low complexity. 2 disordered regions span residues 399-426 (NNNN…TSPI) and 443-542 (FQLN…STPL). Residues 443 to 467 (FQLNSSTNSTGSPLIITSQPMPFQL) are compositionally biased toward polar residues. The segment covering 468–479 (NSNSNTTASSSS) has biased composition (low complexity). Polar residues predominate over residues 480-490 (PITHSNLNTAI). The segment covering 491–508 (TSTTTSNSNSNNNSNNNN) has biased composition (low complexity). A compositionally biased stretch (gly residues) spans 509–525 (SGGGGGGGGGGGGGGGT). Residue aspartate 585 is the Proton acceptor; for protein kinase activity of the active site. The tract at residues 863–1121 (GKEFIIVSGL…TMKIVLKNLD (259 aa)) is AAA. 871–878 (GLSGVGKT) provides a ligand contact to ATP. Disordered stretches follow at residues 1040–1077 (NNFS…NNNI) and 1261–1290 (TTTT…NNSD). Residues 1261-1288 (TTTTNNNTTNNTNNNNTNNNNNNTNGNN) are compositionally biased toward low complexity. 2 consecutive transmembrane segments (helical) span residues 1567 to 1587 (VMVI…TLLL) and 1599 to 1619 (ISSW…IGHF). One copy of the TPR repeat lies at 1965-1998 (SQLMLAKAEFERINGNFEQAMEYFSEAISLAQQF). Disordered stretches follow at residues 2071 to 2095 (EYSN…QASI) and 2299 to 2349 (GYNN…NNNK). Residues 2073-2095 (SNNNNNNNSNNNNNNANQSQASI) show a composition bias toward low complexity. In terms of domain architecture, GAF spans 2215–2465 (YFDRLLKRLM…SNARLFIKVN (251 aa)). The Histidine kinase domain maps to 2491–2769 (NMSHEMRTPL…TFHFCVELGK (279 aa)). The residue at position 2494 (histidine 2494) is a Phosphohistidine; by autocatalysis. The segment covering 2637–2648 (TTTNNKKQLNTD) has biased composition (low complexity). Disordered stretches follow at residues 2637-2673 (TTTN…SIDL), 2785-2815 (LLNN…NNNN), 2917-3030 (LSPK…NNNS), 3134-3160 (NNNI…HSQY), and 3247-3281 (NSIS…TITT). The segment covering 2649–2673 (NDGDDDDDDDNENLDENNEDTSIDL) has biased composition (acidic residues). Low complexity-rich tracts occupy residues 2787–2815 (NNNN…NNNN), 2935–3029 (LSSS…HNNN), and 3134–3145 (NNNINNINNNNN). Residues 3305–3424 (KILIVEDNEM…DLRYVINRYG (120 aa)) enclose the Response regulatory domain. Aspartate 3356 carries the post-translational modification 4-aspartylphosphate.

This sequence belongs to the protein kinase superfamily. Ser/Thr protein kinase family. Post-translationally, activation probably requires transfer of a phosphate group between a histidine in the kinase core (transmitter) domain and an aspartate of the receiver domain.

The protein resides in the membrane. The catalysed reaction is ATP + protein L-histidine = ADP + protein N-phospho-L-histidine.. It catalyses the reaction L-seryl-[protein] + ATP = O-phospho-L-seryl-[protein] + ADP + H(+). It carries out the reaction L-threonyl-[protein] + ATP = O-phospho-L-threonyl-[protein] + ADP + H(+). Its function is as follows. Acts as a receptor histidine kinase for a signal transduction pathway. This protein undergoes an ATP-dependent autophosphorylation at a conserved histidine residue in the kinase core, and a phosphoryl group is then transferred to a conserved aspartate residue in the receiver domain. This chain is Hybrid signal transduction histidine kinase G (dhkG), found in Dictyostelium discoideum (Social amoeba).